A 178-amino-acid chain; its full sequence is CASP-like protein 2A2 (178 aa).

Topologically, residues 1 to 22 (MDKTDQTAIDGSALELNRTEKT) are cytoplasmic. The helical transmembrane segment at 23 to 43 (VEAVLRVASMALSITGLVIMI) threads the bilayer. Topologically, residues 44–69 (KNSISNDFGSLSYSNLGAFMYLVGAN) are extracellular. Residues 70-90 (GVCAAYSLLSALAILALPCPI) form a helical membrane-spanning segment. Over 91 to 96 (SKVQVR) the chain is Cytoplasmic. A helical transmembrane segment spans residues 97-117 (TLFLLDQVVTYVVLAAGAVSA). Residues 118 to 145 (ETVYLAYYGNIPITWSSACDSYGIFCHK) are Extracellular-facing. Residues 146-166 (ALISVVFTFVVSLLYMLLSLI) traverse the membrane as a helical segment. Residues 167–178 (SSYRLFSRFEAP) are Cytoplasmic-facing.

It belongs to the Casparian strip membrane proteins (CASP) family. In terms of assembly, homodimer and heterodimers.

It localises to the cell membrane. This chain is CASP-like protein 2A2, found in Arabidopsis lyrata subsp. lyrata (Lyre-leaved rock-cress).